The chain runs to 490 residues: Pyridine nucleotide-disulfide oxidoreductase domain-containing protein 1 (490 aa).

The protein belongs to the class-I pyridine nucleotide-disulfide oxidoreductase family. PYROXD1 subfamily. The cofactor is FAD.

The protein localises to the nucleus. Its subcellular location is the cytoplasm. It is found in the myofibril. It localises to the sarcomere. Probable FAD-dependent oxidoreductase; involved in the cellular oxidative stress response. Required for normal sarcomere structure and muscle fiber integrity. The polypeptide is Pyridine nucleotide-disulfide oxidoreductase domain-containing protein 1 (pyroxd1) (Danio rerio (Zebrafish)).